The sequence spans 876 residues: Alanine--tRNA ligase (876 aa).

Residues His565, His569, Cys667, and His671 each coordinate Zn(2+).

This sequence belongs to the class-II aminoacyl-tRNA synthetase family. The cofactor is Zn(2+).

It localises to the cytoplasm. It catalyses the reaction tRNA(Ala) + L-alanine + ATP = L-alanyl-tRNA(Ala) + AMP + diphosphate. Its function is as follows. Catalyzes the attachment of alanine to tRNA(Ala) in a two-step reaction: alanine is first activated by ATP to form Ala-AMP and then transferred to the acceptor end of tRNA(Ala). Also edits incorrectly charged Ser-tRNA(Ala) and Gly-tRNA(Ala) via its editing domain. The sequence is that of Alanine--tRNA ligase from Staphylococcus aureus (strain Mu3 / ATCC 700698).